Consider the following 85-residue polypeptide: MNSLLIITACLVLFVWAKEGYLVNKSTGCKYGCFWLGKNENCDMECKAKNQGGSYGYCYSFACWCEGLPDSTPTYPLPNKSCSKK.

The first 17 residues, 1–17 (MNSLLIITACLVLFVWA), serve as a signal peptide directing secretion. Residues 18-83 (KEGYLVNKST…TYPLPNKSCS (66 aa)) enclose the LCN-type CS-alpha/beta domain. Disulfide bonds link C29–C82, C33–C58, C42–C63, and C46–C65. Positions 84-85 (KK) are cleaved as a propeptide — removed by a carboxypeptidase.

The protein belongs to the long (4 C-C) scorpion toxin superfamily. Sodium channel inhibitor family. Beta subfamily. In terms of tissue distribution, expressed by the venom gland.

The protein resides in the secreted. Its function is as follows. Beta toxins bind voltage-independently at site-4 of sodium channels (Nav) and shift the voltage of activation toward more negative potentials thereby affecting sodium channel activation and promoting spontaneous and repetitive firing. In Centruroides limpidus (Mexican scorpion), this protein is Toxin Cll5c*.